Consider the following 616-residue polypeptide: Proline dehydrogenase 1, mitochondrial (616 aa).

This sequence belongs to the proline oxidase family. It depends on FAD as a cofactor.

The protein localises to the mitochondrion matrix. The catalysed reaction is L-proline + a quinone = (S)-1-pyrroline-5-carboxylate + a quinol + H(+). It participates in amino-acid degradation; L-proline degradation into L-glutamate; L-glutamate from L-proline: step 1/2. Converts proline to delta-1-pyrroline-5-carboxylate. Through proline catabolism, promotes reactive oxygen species (ROS) production and the transcription of skn-1 target genes in response to bacterial infection by P.aeruginosa. The chain is Proline dehydrogenase 1, mitochondrial from Caenorhabditis elegans.